The sequence spans 505 residues: Histidine--tRNA ligase (505 aa).

It belongs to the class-II aminoacyl-tRNA synthetase family. As to quaternary structure, homodimer.

Its subcellular location is the cytoplasm. The catalysed reaction is tRNA(His) + L-histidine + ATP = L-histidyl-tRNA(His) + AMP + diphosphate + H(+). The polypeptide is Histidine--tRNA ligase (Jannaschia sp. (strain CCS1)).